The following is a 52-amino-acid chain: Ornatin-B (52 aa).

The Cell attachment site motif lies at 42 to 44; the sequence is RGD.

Belongs to the ornatin family.

The protein localises to the secreted. Potent inhibitor of fibrinogen interaction with platelet receptors expressed on glycoprotein IIb-IIIa complex. May prevent blood from clotting during either feeding and/or storage of ingested blood. This is Ornatin-B from Placobdella ornata (Turtle leech).